A 1442-amino-acid polypeptide reads, in one-letter code: DNA polymerase III PolC-type (1442 aa).

Residues 409-568 (YVIFDIETTG…YDAIVLADVF (160 aa)) enclose the Exonuclease domain.

It belongs to the DNA polymerase type-C family. PolC subfamily.

It localises to the cytoplasm. It carries out the reaction DNA(n) + a 2'-deoxyribonucleoside 5'-triphosphate = DNA(n+1) + diphosphate. Required for replicative DNA synthesis. This DNA polymerase also exhibits 3' to 5' exonuclease activity. The chain is DNA polymerase III PolC-type from Ureaplasma parvum serovar 3 (strain ATCC 700970).